The following is a 218-amino-acid chain: Large ribosomal subunit protein uL3 (218 aa).

The tract at residues 124–162 is disordered; the sequence is KRHGFSRGPMTHGSKNHREPGSTGAGTTPGRIYPGKRMA.

Belongs to the universal ribosomal protein uL3 family. Part of the 50S ribosomal subunit. Forms a cluster with proteins L14 and L19.

Its function is as follows. One of the primary rRNA binding proteins, it binds directly near the 3'-end of the 23S rRNA, where it nucleates assembly of the 50S subunit. The protein is Large ribosomal subunit protein uL3 of Synechococcus sp. (strain CC9605).